The following is a 493-amino-acid chain: Glutamyl-tRNA(Gln) amidotransferase subunit A (493 aa).

Residues lysine 78 and serine 158 each act as charge relay system in the active site. Serine 182 functions as the Acyl-ester intermediate in the catalytic mechanism.

Belongs to the amidase family. GatA subfamily. In terms of assembly, heterotrimer of A, B and C subunits.

The catalysed reaction is L-glutamyl-tRNA(Gln) + L-glutamine + ATP + H2O = L-glutaminyl-tRNA(Gln) + L-glutamate + ADP + phosphate + H(+). Its function is as follows. Allows the formation of correctly charged Gln-tRNA(Gln) through the transamidation of misacylated Glu-tRNA(Gln) in organisms which lack glutaminyl-tRNA synthetase. The reaction takes place in the presence of glutamine and ATP through an activated gamma-phospho-Glu-tRNA(Gln). The polypeptide is Glutamyl-tRNA(Gln) amidotransferase subunit A (Beijerinckia indica subsp. indica (strain ATCC 9039 / DSM 1715 / NCIMB 8712)).